Consider the following 365-residue polypeptide: Putative glutamate--cysteine ligase 2-2 (365 aa).

This sequence belongs to the glutamate--cysteine ligase type 2 family. YbdK subfamily.

The catalysed reaction is L-cysteine + L-glutamate + ATP = gamma-L-glutamyl-L-cysteine + ADP + phosphate + H(+). Functionally, ATP-dependent carboxylate-amine ligase which exhibits weak glutamate--cysteine ligase activity. This chain is Putative glutamate--cysteine ligase 2-2, found in Mycolicibacterium vanbaalenii (strain DSM 7251 / JCM 13017 / BCRC 16820 / KCTC 9966 / NRRL B-24157 / PYR-1) (Mycobacterium vanbaalenii).